The chain runs to 337 residues: Protein-arginine kinase (337 aa).

The Phosphagen kinase C-terminal domain occupies 12 to 240 (IVIASKVKIL…NKLILREKNQ (229 aa)). ATP contacts are provided by residues 15 to 19 (ASKVK), 162 to 166 (RTKVF), and 193 to 198 (KSIYNS).

This sequence belongs to the ATP:guanido phosphotransferase family.

It carries out the reaction L-arginyl-[protein] + ATP = N(omega)-phospho-L-arginyl-[protein] + ADP + H(+). Catalyzes the specific phosphorylation of arginine residues in proteins. This Clostridium perfringens (strain 13 / Type A) protein is Protein-arginine kinase.